The following is a 223-amino-acid chain: Deoxyribose-phosphate aldolase (223 aa).

The Proton donor/acceptor role is filled by Asp89. Lys152 acts as the Schiff-base intermediate with acetaldehyde in catalysis. Lys181 (proton donor/acceptor) is an active-site residue.

Belongs to the DeoC/FbaB aldolase family. DeoC type 1 subfamily.

The protein localises to the cytoplasm. It catalyses the reaction 2-deoxy-D-ribose 5-phosphate = D-glyceraldehyde 3-phosphate + acetaldehyde. It participates in carbohydrate degradation; 2-deoxy-D-ribose 1-phosphate degradation; D-glyceraldehyde 3-phosphate and acetaldehyde from 2-deoxy-alpha-D-ribose 1-phosphate: step 2/2. In terms of biological role, catalyzes a reversible aldol reaction between acetaldehyde and D-glyceraldehyde 3-phosphate to generate 2-deoxy-D-ribose 5-phosphate. In Listeria monocytogenes serovar 1/2a (strain ATCC BAA-679 / EGD-e), this protein is Deoxyribose-phosphate aldolase.